The sequence spans 466 residues: Hydroxyproline dehydrogenase (466 aa).

Belongs to the proline oxidase family. FAD serves as cofactor.

It catalyses the reaction trans-4-hydroxy-L-proline + a quinone = (3R,5S)-1-pyrroline-3-hydroxy-5-carboxylate + a quinol + H(+). The catalysed reaction is L-proline + a quinone = (S)-1-pyrroline-5-carboxylate + a quinol + H(+). The protein operates within amino-acid degradation; L-proline degradation into L-glutamate; L-glutamate from L-proline: step 1/2. In terms of biological role, dehydrogenase that converts trans-4-L-hydroxyproline to delta-1-pyrroline-3-hydroxy-5-carboxylate (Hyp) using a quinone as the terminal electron acceptor. Can also use proline as a substrate but with a very much lower efficiency. Does not react with other diastereomers of Hyp: trans-4-D-hydroxyproline and cis-4-L-hydroxyproline. In Xenopus laevis (African clawed frog), this protein is Hydroxyproline dehydrogenase (prodh2).